Here is a 206-residue protein sequence, read N- to C-terminus: IMPACT family member HI_0722 (206 aa).

This sequence belongs to the IMPACT family.

This chain is IMPACT family member HI_0722, found in Haemophilus influenzae (strain ATCC 51907 / DSM 11121 / KW20 / Rd).